Here is a 218-residue protein sequence, read N- to C-terminus: DNA-directed RNA polymerases IV and V subunit 5B (218 aa).

This sequence belongs to the archaeal Rpo5/eukaryotic RPB5 RNA polymerase subunit family. Component of the RNA polymerase IV and V complexes. Interacts with NRPD1. As to expression, expressed inleaves, flower buds, flowers and siliques.

The protein resides in the nucleus. Its function is as follows. DNA-dependent RNA polymerase catalyzes the transcription of DNA into RNA using the four ribonucleoside triphosphates as substrates. Component of RNA polymerases IV and V which mediate short-interfering RNAs (siRNA) accumulation and subsequent RNA-directed DNA methylation-dependent (RdDM) transcriptional gene silencing (TGS) of endogenous repeated sequences, including transposable elements. This is DNA-directed RNA polymerases IV and V subunit 5B (NRPD5B) from Arabidopsis thaliana (Mouse-ear cress).